Reading from the N-terminus, the 347-residue chain is Protein RecA (347 aa).

ATP is bound at residue 67-74; it reads GPESSGKT.

The protein belongs to the RecA family.

Its subcellular location is the cytoplasm. Its function is as follows. Can catalyze the hydrolysis of ATP in the presence of single-stranded DNA, the ATP-dependent uptake of single-stranded DNA by duplex DNA, and the ATP-dependent hybridization of homologous single-stranded DNAs. It interacts with LexA causing its activation and leading to its autocatalytic cleavage. In Helicobacter pylori (strain P12), this protein is Protein RecA.